The sequence spans 443 residues: Tubulin beta-1 chain (443 aa).

GTP is bound by residues Gln-11, Glu-69, Ser-138, Gly-142, Thr-143, Gly-144, Asn-204, and Asn-226. Position 69 (Glu-69) interacts with Mg(2+). Residues 424 to 443 (QYQDATAEREGEYEEDYDEA) are disordered. The span at 434–443 (GEYEEDYDEA) shows a compositional bias: acidic residues.

The protein belongs to the tubulin family. In terms of assembly, dimer of alpha and beta chains. A typical microtubule is a hollow water-filled tube with an outer diameter of 25 nm and an inner diameter of 15 nM. Alpha-beta heterodimers associate head-to-tail to form protofilaments running lengthwise along the microtubule wall with the beta-tubulin subunit facing the microtubule plus end conferring a structural polarity. Microtubules usually have 13 protofilaments but different protofilament numbers can be found in some organisms and specialized cells. Mg(2+) serves as cofactor.

The protein localises to the cytoplasm. Its subcellular location is the cytoskeleton. Tubulin is the major constituent of microtubules, a cylinder consisting of laterally associated linear protofilaments composed of alpha- and beta-tubulin heterodimers. Microtubules grow by the addition of GTP-tubulin dimers to the microtubule end, where a stabilizing cap forms. Below the cap, tubulin dimers are in GDP-bound state, owing to GTPase activity of alpha-tubulin. This Anemia phyllitidis (Fern) protein is Tubulin beta-1 chain (TUBB1).